The sequence spans 189 residues: Chitin synthase 2 (189 aa).

The protein belongs to the chitin synthase family. Class II subfamily.

It localises to the cell membrane. It catalyses the reaction [(1-&gt;4)-N-acetyl-beta-D-glucosaminyl](n) + UDP-N-acetyl-alpha-D-glucosamine = [(1-&gt;4)-N-acetyl-beta-D-glucosaminyl](n+1) + UDP + H(+). Functionally, polymerizes chitin, a structural polymer of the cell wall and septum, by transferring the sugar moiety of UDP-GlcNAc to the non-reducing end of the growing chitin polymer. The chain is Chitin synthase 2 (CHS2) from Exophiala exophialae (Black yeast-like fungus).